The sequence spans 120 residues: Immunogenic miracidial antigen 5D (120 aa).

The segment at histidine 41 to histidine 120 is disordered. Residues glycine 45–aspartate 66 show a composition bias toward acidic residues.

The protein belongs to the immunogenic miracidial antigen family.

The sequence is that of Immunogenic miracidial antigen 5D (5D) from Schistosoma japonicum (Blood fluke).